The sequence spans 319 residues: MLFWLLVLLILCGFLWNYKRQLKIANITDKYIFITGCDTGFGNLAARTFDKKGFHVIAACLTESGSTALKAETSERLHTVLLDVTDPENVKRAAQWVKNQVGEKGLWGLINNAGILGVLAPNDWLTVEDYREPVEVNLFGLISVTLNMLPLVKKARGRIINVSSIGGRLAFGGGGYSPSKYAVEGFNDSLRRDMKAFGVHVACIEPGLFKTNLSDPEKTAEKKLAIWKHLSPDIKQQYGESYIEKSLEQLKGTASFVNVDLSLVVECMDHALTSLFPKTRYAAGKDAKTFWIPLSHMPAVLQDFLLLKQKVELANPRAV.

The N-terminal stretch at 1–17 (MLFWLLVLLILCGFLWN) is a signal peptide. Residues 34 to 58 (ITGC…HVIA) and D83 each bind NAD(+). S164 is a substrate binding site. The Proton acceptor role is filled by Y176. Position 180 (K180) interacts with NAD(+).

This sequence belongs to the short-chain dehydrogenases/reductases (SDR) family. Homotetramer.

The protein resides in the microsome membrane. Its subcellular location is the endoplasmic reticulum membrane. It carries out the reaction 3beta-hydroxy-5alpha-pregnane-20-one + NAD(+) = 5alpha-pregnane-3,20-dione + NADH + H(+). The enzyme catalyses 17beta-hydroxy-5alpha-androstan-3-one + NAD(+) = 5alpha-androstan-3,17-dione + NADH + H(+). The catalysed reaction is androsterone + NAD(+) = 5alpha-androstan-3,17-dione + NADH + H(+). It catalyses the reaction 5alpha-androstane-3alpha,17beta-diol + NAD(+) = 17beta-hydroxy-5alpha-androstan-3-one + NADH + H(+). It carries out the reaction all-trans-retinol + NAD(+) = all-trans-retinal + NADH + H(+). The enzyme catalyses 3alpha-hydroxy-5alpha-pregnan-20-one + NAD(+) = 5alpha-pregnane-3,20-dione + NADH + H(+). 3-alpha-hydroxysteroid dehydrogenase that converts 3-alpha-tetrahydroprogesterone (allopregnanolone) to dihydroxyprogesterone and 3-alpha-androstanediol to dihydroxyprogesterone. Also plays a role in the biosynthesis of retinoic acid from retinaldehyde. Can utilize both NADH and NADPH. The chain is Dehydrogenase/reductase SDR family member 9 (DHRS9) from Bos taurus (Bovine).